The following is a 387-amino-acid chain: MGESLSPQALAQPLLLQLFVDTRPLSQHIVQRVKNILAAVEATVPISLQVINVADQPQLVEYYRLVVTPALVKIGPGSRQVLSGIDLTDQLANQLPQWLVQQEAFFADREPPEVNIPFTELGQPETPALQQADAFFQLQQQYADLSERTKFLEQVIALVAHDLRNPLTAALLAVDTIQIRSQSFSVATAKEMQGLCSLFDQARSQLREIERMIAEILEATRHSGESLRINPREVVFEPLLQQVLEQLHERWRSKQQQLITDVPGDLPTLYADPDRLRQVLVNLLDNAIKYTPPGGTITIAALHRTSQKVQISISDTGSGIPRDQLSVIFKNLVRLSRDSSQEGYGIGLSVCQRIVQAHFGRIWVASELGQGSTFHFTMPVYRYTMPC.

The interval 1–97 is interacts with KaiC; it reads MGESLSPQAL…TDQLANQLPQ (97 aa). The Histidine kinase domain maps to 158–382; the sequence is LVAHDLRNPL…TFHFTMPVYR (225 aa). His161 is subject to Phosphohistidine; by autocatalysis.

In terms of assembly, homooligomerizes. Part of the circadian clock (KaiA, KaiB, KaiC, CikA, RpaA, SasA), the composition of which varies during the circadian cycle. Binds to the CI domain of KaiC; KaiB(fs) and SasA compete for the binding site. Binds preferentially to doubly phosphorylated KaiC. Interacts with LdpA. Post-translationally, autophosphorylates in vitro.

It carries out the reaction ATP + protein L-histidine = ADP + protein N-phospho-L-histidine.. Its function is as follows. Member of the two-component regulatory system SasA/RpaA involved in genome-wide circadian gene expression. One of three clock output pathways. Participates in the KaiABC clock protein complex, which constitutes the main circadian regulator in cyanobacteria, via its interaction with KaiC. Required for robustness of the circadian rhythm of gene expression and involved in clock output. KaiC enhances the autophosphorylation activity of SasA, which then transfers its phosphate group to RpaA to activate it. Phosphotransfer is maximal when KaiC phosphorylation is active during the circadian cycle; this two-component system is activated by fully phosphorylated KaiC. A very robust clock is reconstituted with KaiA, KaiB, KaiC, SasA, CikA and RpaA; output is measured by transcription from an appropriate reporter. In addition to its output function, recruits fold-shifted KaiB (KaiB(fs)) to KaiC to cooperatively form the KaiB(6):KaiC(6) complex (independent of SasA kinase activity); at physiological concentrations increases their association. At higher concentrations SasA and KaiB(fs) compete to bind to KaiC. Mutations that decrease cooperativity nearly phenocopy a deletion mutation. In terms of biological role, autophosphorylation and phosphotransfer activities are not essential for clock rhythms in continuous light, but they are essential for adaptation to light/dark cycles. The chain is Adaptive-response sensory kinase SasA from Synechococcus elongatus (strain ATCC 33912 / PCC 7942 / FACHB-805) (Anacystis nidulans R2).